A 444-amino-acid chain; its full sequence is Probable glycine dehydrogenase (decarboxylating) subunit 1 (444 aa).

The protein belongs to the GcvP family. N-terminal subunit subfamily. As to quaternary structure, the glycine cleavage system is composed of four proteins: P, T, L and H. In this organism, the P 'protein' is a heterodimer of two subunits.

The catalysed reaction is N(6)-[(R)-lipoyl]-L-lysyl-[glycine-cleavage complex H protein] + glycine + H(+) = N(6)-[(R)-S(8)-aminomethyldihydrolipoyl]-L-lysyl-[glycine-cleavage complex H protein] + CO2. Functionally, the glycine cleavage system catalyzes the degradation of glycine. The P protein binds the alpha-amino group of glycine through its pyridoxal phosphate cofactor; CO(2) is released and the remaining methylamine moiety is then transferred to the lipoamide cofactor of the H protein. The chain is Probable glycine dehydrogenase (decarboxylating) subunit 1 from Moorella thermoacetica (strain ATCC 39073 / JCM 9320).